Consider the following 919-residue polypeptide: Phosphoenolpyruvate carboxylase (919 aa).

Active-site residues include histidine 138 and lysine 579.

Belongs to the PEPCase type 1 family. Requires Mg(2+) as cofactor.

The catalysed reaction is oxaloacetate + phosphate = phosphoenolpyruvate + hydrogencarbonate. Its function is as follows. Forms oxaloacetate, a four-carbon dicarboxylic acid source for the tricarboxylic acid cycle. This is Phosphoenolpyruvate carboxylase (ppc) from Corynebacterium efficiens (strain DSM 44549 / YS-314 / AJ 12310 / JCM 11189 / NBRC 100395).